Here is a 323-residue protein sequence, read N- to C-terminus: tRNA U34 carboxymethyltransferase (323 aa).

Carboxy-S-adenosyl-L-methionine contacts are provided by residues Lys-91, Trp-105, Lys-110, Gly-130, 152–154 (DPT), 181–182 (IE), Met-196, Tyr-200, and Arg-315.

It belongs to the class I-like SAM-binding methyltransferase superfamily. CmoB family. As to quaternary structure, homotetramer.

The catalysed reaction is carboxy-S-adenosyl-L-methionine + 5-hydroxyuridine(34) in tRNA = 5-carboxymethoxyuridine(34) in tRNA + S-adenosyl-L-homocysteine + H(+). Functionally, catalyzes carboxymethyl transfer from carboxy-S-adenosyl-L-methionine (Cx-SAM) to 5-hydroxyuridine (ho5U) to form 5-carboxymethoxyuridine (cmo5U) at position 34 in tRNAs. The protein is tRNA U34 carboxymethyltransferase of Escherichia coli O7:K1 (strain IAI39 / ExPEC).